Here is a 498-residue protein sequence, read N- to C-terminus: Protein WHAT'S THIS FACTOR 1, chloroplastic (498 aa).

The N-terminal 50 residues, 1-50 (MDAKLLLPFPFAPAAATRSPKSLFLGAPLPPPPRPPPFPLRLRPRPAAVV), are a transit peptide targeting the chloroplast. A PORR domain is found at 59–387 (KEAPFDTVIQ…LKEKMRALVA (329 aa)). 2 disordered regions span residues 397 to 427 (VGTGEEAEGMNGSLQSRDQVSDEEYDDEDEG) and 446 to 498 (DYEW…RERW). Acidic residues-rich tracts occupy residues 417–427 (SDEEYDDEDEG) and 456–466 (ENDDSPPDFGD).

Its subcellular location is the plastid. It is found in the chloroplast. Functionally, RNA-binding protein involved in the chloroplastic group II intron splicing. Binds specific group II introns and promotes their splicing. Functions in the context of a heterodimer with the ribonuclease III domain-containing protein RNC1. The polypeptide is Protein WHAT'S THIS FACTOR 1, chloroplastic (Zea mays (Maize)).